The following is a 407-amino-acid chain: S-adenosylmethionine synthase (407 aa).

Position 19 (H19) interacts with ATP. D21 provides a ligand contact to Mg(2+). E47 provides a ligand contact to K(+). Positions 60 and 103 each coordinate L-methionine. Residues 103–113 (QSQEIADGVDN) are flexible loop. The tract at residues 107–134 (IADGVDNSDEARTNGDVEEDDRAGAGDQ) is disordered. ATP-binding positions include 178-180 (DGK), D258, 264-265 (RK), A281, and K285. D258 is a binding site for L-methionine. L-methionine is bound at residue K289.

This sequence belongs to the AdoMet synthase family. Homotetramer; dimer of dimers. Mg(2+) serves as cofactor. K(+) is required as a cofactor.

Its subcellular location is the cytoplasm. The catalysed reaction is L-methionine + ATP + H2O = S-adenosyl-L-methionine + phosphate + diphosphate. It participates in amino-acid biosynthesis; S-adenosyl-L-methionine biosynthesis; S-adenosyl-L-methionine from L-methionine: step 1/1. In terms of biological role, catalyzes the formation of S-adenosylmethionine (AdoMet) from methionine and ATP. The overall synthetic reaction is composed of two sequential steps, AdoMet formation and the subsequent tripolyphosphate hydrolysis which occurs prior to release of AdoMet from the enzyme. The chain is S-adenosylmethionine synthase from Corynebacterium glutamicum (strain ATCC 13032 / DSM 20300 / JCM 1318 / BCRC 11384 / CCUG 27702 / LMG 3730 / NBRC 12168 / NCIMB 10025 / NRRL B-2784 / 534).